The primary structure comprises 2476 residues: Non-reducing polyketide synthase pkdA (2476 aa).

Residues 22–230 (PNLNDAYLQS…VISEARLATL (209 aa)) form an N-terminal acylcarrier protein transacylase domain (SAT) region. The Nucleophile; for transacylase activity role is filled by cysteine 142. Catalysis depends on histidine 261, which acts as the Proton donor/acceptor; for transacylase activity. Residues 388-805 (DESIAVVGMA…GSNASLVVTQ (418 aa)) enclose the Ketosynthase family 3 (KS3) domain. Residues cysteine 554, histidine 689, and histidine 728 each act as for beta-ketoacyl synthase activity in the active site. Residues 919–1204 (FGGQRSSFVG…GSGVTNLASR (286 aa)) form a malonyl-CoA:ACP transacylase (MAT) region. Positions 1290–1417 (QKGLWTFVGY…GRITFQTPKQ (128 aa)) are N-terminal hotdog fold. The PKS/mFAS DH domain occupies 1290–1592 (QKGLWTFVGY…FVEVSIAGMS (303 aa)). Residues 1321–1590 (YVSAHVIAQT…LHFVEVSIAG (270 aa)) form a product template (PT) domain region. The active-site Proton acceptor; for dehydratase activity is histidine 1325. The C-terminal hotdog fold stretch occupies residues 1445-1592 (QTIQGSRNIY…FVEVSIAGMS (148 aa)). The active-site Proton donor; for dehydratase activity is the aspartate 1501. The interval 1626-1649 (DVSKNEKDAKAPSKKKESTSKSPG) is disordered. One can recognise a Carrier domain in the interval 1650 to 1724 (HDILARVRTL…SLVKCIGANM (75 aa)). Serine 1684 carries the post-translational modification O-(pantetheine 4'-phosphoryl)serine. A disordered region spans residues 1727–1766 (SDTSRTGDDSSDDLETASAESETSSGINNEDSHNIDRQQI). Positions 1742 to 1751 (TASAESETSS) are enriched in low complexity. The tract at residues 1881 to 2030 (ELLRQYPEHA…DCEKTPSSHL (150 aa)) is methyltransferase (CMeT) domain. Positions 2094 to 2340 (VTGATGSLGS…SWCPVDDVAA (247 aa)) are NADPH-binding domain.

Pantetheine 4'-phosphate is required as a cofactor.

The enzyme catalyses propanoyl-CoA + 3 malonyl-CoA + AH2 + 2 S-adenosyl-L-methionine + H(+) = 2-ethyl-4,6-dihydroxy-3,5-dimethylbenzaldehyde + A + 2 S-adenosyl-L-homocysteine + 3 CO2 + 4 CoA + H2O. It functions in the pathway secondary metabolite biosynthesis. Functionally, non-reducing polyketide synthase that synthesizes 6-ethyl-2,4-dihydroxy-3,5-dimethylbenzaldehyde via condensation of one propanoyl-CoA starter unit with 3 malonyl-CoA units, as well as 2 methylation steps. The chain is Non-reducing polyketide synthase pkdA from Emericella nidulans (strain FGSC A4 / ATCC 38163 / CBS 112.46 / NRRL 194 / M139) (Aspergillus nidulans).